Here is a 72-residue protein sequence, read N- to C-terminus: Conorfamide-Tx2 (72 aa).

Positions Met1–Ala19 are cleaved as a signal peptide. Positions Thr20–Lys25 are excised as a propeptide. Positions Ala32 to Arg39 are positively charged region crucial for activity against MRGPRX1 receptors. Ile43 is subject to Isoleucine amide. Positions Gly44 to Gln72 are excised as a propeptide.

It belongs to the FARP (FMRFamide related peptide) family. As to expression, expressed by the venom duct.

The protein localises to the secreted. Functionally, this peptide activates human sensory neuron-specific G-protein coupled receptors MRGPRX1, but not mouse receptors (EC(50)=0.54 uM). Compared with the agonist chloroquine (anti-malaria drug), it is 600-fold more potent. In vivo, induces itch sensation, since intradermal cheek injection into humanized transgenic mouse (mouse MRGPRX1 replaced by human MRGPRX1) induces scratching. In vivo, treatment of zebrafish larvae with high doses (10 uM) induces hypoactivity at the beginning of the experiment during the dark phase and hyperactivity in the strobe phase after one hour, even after the removal of the toxin from the solution. The sequence is that of Conorfamide-Tx2 from Conus textile (Cloth-of-gold cone).